The sequence spans 1525 residues: Receptor-type guanylate cyclase Gyc76C (1525 aa).

An N-terminal signal peptide occupies residues 1–19 (MTRWPFNLLLLLSVAVRDC). Residues 20 to 493 (SNHRTVLTVG…KKDDTHYTST (474 aa)) are Extracellular-facing. Residues Asn-74, Asn-184, Asn-222, Asn-338, Asn-383, Asn-394, Asn-416, Asn-428, and Asn-458 are each glycosylated (N-linked (GlcNAc...) asparagine). A helical membrane pass occupies residues 494–514 (VAAVVLGVLLFCSGVITMSIY). At 515-1525 (RKWKIELEIE…AAARDRESIV (1011 aa)) the chain is on the cytoplasmic side. The Protein kinase domain occupies 547–824 (PSKVSLMSAQ…SVIRNRLKKM (278 aa)). ATP-binding positions include 553–561 (MSAQSYGSR) and Lys-581. In terms of domain architecture, Guanylate cyclase spans 896 to 1026 (TIYFSDIVGF…DTVNTASRME (131 aa)). Asp-901, Ile-902, and Asp-945 together coordinate Mg(2+). Disordered stretches follow at residues 1122–1168 (GSRR…NGLG), 1192–1217 (ETNE…LVRQ), and 1256–1308 (ESRS…VHSS). The span at 1147–1162 (ESPRMVSKRDRDRERP) shows a compositional bias: basic and acidic residues. Residues 1202–1212 (GGSGGVSGSGS) are compositionally biased toward gly residues. A compositionally biased stretch (polar residues) spans 1282–1308 (LSKNNSRSLDTGVSLISGNPNGEVHSS).

The protein belongs to the adenylyl cyclase class-4/guanylyl cyclase family. Interacts with the semaphorin 1A receptor PlexA; PlexA enhances Gyc76C catalytic activity. Interacts with the PDZ domain-containing protein kermit; kermit increases cell surface expression of Gyc76C. As to expression, in the adult, widely distributed in the head and thorax with highest levels in the optic lobe and central brain and expression also detected in the retina. Expressed at similar levels in adult head and body. In females, highly expressed in oocytes with lower levels in the digestive tract. In mid-embryogenesis, enriched in the circular visceral mesoderm that overlies the migrating salivary gland and in the fat body that underlies the gland but at background levels in the gland itself. In late embryogenesis, detected in the mature salivary gland, in the somatic body wall muscles and the tendon cells to which the muscles attach, and in the constricting midgut. Also expressed in migrating tracheal cells at mid-embryogenesis and in the developed trachea at the end of embryogenesis with enrichment in the apical domains.

It is found in the cell membrane. The enzyme catalyses GTP = 3',5'-cyclic GMP + diphosphate. In terms of biological role, guanylate cyclase involved in the production of the second messenger cGMP. Acts as a receptor for the NPLP1-4 peptide and modulates the innate immune IMD pathway in response to salt stress by inducing nuclear translocation of NF-kappa-B protein Rel which leads to increased expression of the antimicrobial peptide diptericin. Plays a role in Sema-1a-mediated axon repulsion which is required for the correct establishment of neuromuscular connectivity. Required in developing embryonic somatic muscle for correct patterning of ventral and lateral muscles and for localization of integrin beta-ps at developing dorsal muscle myotendinous junctions. Required for invagination, migration and lumen shape of the embryonic salivary gland by regulating the localization of the integrin-binding protein rhea/Talin to the visceral mesoderm surrounding the gland and maintaining the laminin matrix. Required in the developing wing to regulate extracellular matrix (ECM) organization by activating the cGMP-dependent protein kinase For which represses the activity of matrix metalloproteases such as Mmp2 and decreases ECM matrix reorganization. The chain is Receptor-type guanylate cyclase Gyc76C from Drosophila melanogaster (Fruit fly).